We begin with the raw amino-acid sequence, 229 residues long: Ribonuclease 3 (229 aa).

An RNase III domain is found at 4 to 133; it reads WEELQESVGF…FIGALYLDNG (130 aa). E46 serves as a coordination point for Mg(2+). D50 is an active-site residue. Residues D119 and E122 each contribute to the Mg(2+) site. E122 is a catalytic residue. The DRBM domain occupies 159-228; the sequence is DYKTQLQEIV…AQFAINKLIH (70 aa).

The protein belongs to the ribonuclease III family. As to quaternary structure, homodimer. Mg(2+) is required as a cofactor.

Its subcellular location is the cytoplasm. It catalyses the reaction Endonucleolytic cleavage to 5'-phosphomonoester.. Its function is as follows. Digests double-stranded RNA. Involved in the processing of primary rRNA transcript to yield the immediate precursors to the large and small rRNAs (23S and 16S). Processes some mRNAs, and tRNAs when they are encoded in the rRNA operon. Processes pre-crRNA and tracrRNA of type II CRISPR loci if present in the organism. This Listeria monocytogenes serovar 1/2a (strain ATCC BAA-679 / EGD-e) protein is Ribonuclease 3.